The primary structure comprises 100 residues: Cobalt transport protein CbiN (100 aa).

The next 2 helical transmembrane spans lie at 8–28 (LSNW…LIFV) and 69–89 (LLFS…VGLY).

It belongs to the CbiN family. In terms of assembly, forms an energy-coupling factor (ECF) transporter complex composed of an ATP-binding protein (A component, CbiO), a transmembrane protein (T component, CbiQ) and 2 possible substrate-capture proteins (S components, CbiM and CbiN) of unknown stoichimetry.

It is found in the cell inner membrane. The protein operates within cofactor biosynthesis; adenosylcobalamin biosynthesis. Part of the energy-coupling factor (ECF) transporter complex CbiMNOQ involved in cobalt import. This is Cobalt transport protein CbiN from Nostoc sp. (strain PCC 7120 / SAG 25.82 / UTEX 2576).